Consider the following 311-residue polypeptide: MTDSESPTPKKSIPARFPKWLRQKLPLGRVFAQTDNTIKNKGLPTVCEEASCPNRTHCWSRHTATYLALGDACTRRCGFCDIDFTRNPLPPDPEEGAKIAESAKALGLKHIVITMVSRDDLEDGGASALVHIIETLHTELPTATIEVLASDFEGNIAALHHLLDAHIAIYNHNVETVERLTPFVRHKATYRRSLMMLENAAKYLPNLMTKSGIMVGLGEQESEVKQTLKDLADHGVKIVTIGQYLRPSRRHIPVKSYVSPETFDYYRSVGESLGLFIYAGPFVRSSFNADSVFEAMRQRETSTSSLLPNKD.

Positions 47, 52, 58, 73, 77, 80, and 286 each coordinate [4Fe-4S] cluster. Residues 59–276 (WSRHTATYLA…RSVGESLGLF (218 aa)) enclose the Radical SAM core domain.

Belongs to the radical SAM superfamily. Lipoyl synthase family. [4Fe-4S] cluster is required as a cofactor.

It localises to the cytoplasm. The enzyme catalyses [[Fe-S] cluster scaffold protein carrying a second [4Fe-4S](2+) cluster] + N(6)-octanoyl-L-lysyl-[protein] + 2 oxidized [2Fe-2S]-[ferredoxin] + 2 S-adenosyl-L-methionine + 4 H(+) = [[Fe-S] cluster scaffold protein] + N(6)-[(R)-dihydrolipoyl]-L-lysyl-[protein] + 4 Fe(3+) + 2 hydrogen sulfide + 2 5'-deoxyadenosine + 2 L-methionine + 2 reduced [2Fe-2S]-[ferredoxin]. It participates in protein modification; protein lipoylation via endogenous pathway; protein N(6)-(lipoyl)lysine from octanoyl-[acyl-carrier-protein]: step 2/2. Functionally, catalyzes the radical-mediated insertion of two sulfur atoms into the C-6 and C-8 positions of the octanoyl moiety bound to the lipoyl domains of lipoate-dependent enzymes, thereby converting the octanoylated domains into lipoylated derivatives. This Chlamydia trachomatis serovar A (strain ATCC VR-571B / DSM 19440 / HAR-13) protein is Lipoyl synthase.